The primary structure comprises 196 residues: Probable splicing factor, arginine/serine-rich 4 (196 aa).

Residues 19 to 97 form the RRM domain; that stretch reads TSLKIDNLSY…RELRVTLAKY (79 aa). The span at 91-106 shows a compositional bias: basic and acidic residues; it reads RVTLAKYDRPSDERGG. The segment at 91–196 is disordered; it reads RVTLAKYDRP…SPSRSRSNSR (106 aa). Basic residues predominate over residues 112–141; the sequence is GRRRSRSPRRRSRSPRYSRSRSPRRSRSRT. Basic and acidic residues-rich tracts occupy residues 145 to 160 and 167 to 176; these read PSRD…DNSR and PPREDGSPKE. Residues 184–196 show a composition bias toward low complexity; sequence ASRSPSRSRSNSR.

The protein belongs to the splicing factor SR family. In terms of processing, extensively phosphorylated on serine residues in the RS domain.

Its subcellular location is the nucleus. In terms of biological role, may play a functionally redundant role in embryogenesis. In Caenorhabditis elegans, this protein is Probable splicing factor, arginine/serine-rich 4 (rsp-4).